The following is a 102-amino-acid chain: MYAVLVTGGKQYRVAQGEKLRIEKLEVEVGSEIKFDNILMLGDSDGVKLGDALKGAAVTAKVLSQGRADKVRIIKFRRRKHHMKRQGHRQYYTEIEITGIAG.

Belongs to the bacterial ribosomal protein bL21 family. As to quaternary structure, part of the 50S ribosomal subunit. Contacts protein L20.

In terms of biological role, this protein binds to 23S rRNA in the presence of protein L20. The sequence is that of Large ribosomal subunit protein bL21 from Stenotrophomonas maltophilia (strain K279a).